Consider the following 221-residue polypeptide: Large ribosomal subunit protein bL25 (221 aa).

A disordered region spans residues 174-221 (SVVTVVPPTDEPTEEEVEAMEGEAATEEPEVVGEEKEEDSEEENKDEE). Residues 184–221 (EPTEEEVEAMEGEAATEEPEVVGEEKEEDSEEENKDEE) are compositionally biased toward acidic residues.

Belongs to the bacterial ribosomal protein bL25 family. CTC subfamily. As to quaternary structure, part of the 50S ribosomal subunit; part of the 5S rRNA/L5/L18/L25 subcomplex. Contacts the 5S rRNA. Binds to the 5S rRNA independently of L5 and L18.

This is one of the proteins that binds to the 5S RNA in the ribosome where it forms part of the central protuberance. The protein is Large ribosomal subunit protein bL25 of Staphylococcus haemolyticus (strain JCSC1435).